The chain runs to 338 residues: Phenylalanine--tRNA ligase alpha subunit (338 aa).

E252 contributes to the Mg(2+) binding site.

It belongs to the class-II aminoacyl-tRNA synthetase family. Phe-tRNA synthetase alpha subunit type 1 subfamily. In terms of assembly, tetramer of two alpha and two beta subunits. Requires Mg(2+) as cofactor.

It localises to the cytoplasm. It catalyses the reaction tRNA(Phe) + L-phenylalanine + ATP = L-phenylalanyl-tRNA(Phe) + AMP + diphosphate + H(+). The sequence is that of Phenylalanine--tRNA ligase alpha subunit from Pseudomonas entomophila (strain L48).